A 106-amino-acid polypeptide reads, in one-letter code: ATP-dependent Clp protease adapter protein ClpS (106 aa).

Belongs to the ClpS family. As to quaternary structure, binds to the N-terminal domain of the chaperone ClpA.

Involved in the modulation of the specificity of the ClpAP-mediated ATP-dependent protein degradation. The chain is ATP-dependent Clp protease adapter protein ClpS from Escherichia fergusonii (strain ATCC 35469 / DSM 13698 / CCUG 18766 / IAM 14443 / JCM 21226 / LMG 7866 / NBRC 102419 / NCTC 12128 / CDC 0568-73).